A 33-amino-acid polypeptide reads, in one-letter code: Ferredoxin (33 aa).

The region spanning 3–33 (KYKVRLLSEAEGIDVTIDSADDVYILDAAEE) is the 2Fe-2S ferredoxin-type domain.

Belongs to the 2Fe2S plant-type ferredoxin family. Requires [2Fe-2S] cluster as cofactor.

Its subcellular location is the plastid. It is found in the chloroplast. Functionally, ferredoxins are iron-sulfur proteins that transfer electrons in a wide variety of metabolic reactions. This Porphyridium aerugineum (Red microalga) protein is Ferredoxin.